Here is a 624-residue protein sequence, read N- to C-terminus: Protein NRT1/ PTR FAMILY 6.1 (624 aa).

The interval 1-20 (MVASEIKSPVSVPETPGSSS) is disordered. The next 2 helical transmembrane spans lie at 83–100 (MAYFGLSVNMVAFMFYVM) and 114–134 (FLGISQASSVLGGFLADAYLG). Thr138 is subject to Phosphothreonine. Helical transmembrane passes span 139–159 (IAIFTTMYLVGLIGITLGASL), 184–204 (SWQMLYLYTVLYITGFGAAGI), 230–250 (FFNFFYLSVTLGAIIAFTLVV), 258–278 (WGMAFGTLAVAMGISNALFFA), 378–398 (LIPIPTCTIMLSLVLTEYLTL), 422–442 (VFPGLSIFLILSLYYSVFVPI), 459–479 (VGIGLAVSIISVAWAGLFENY), 504–524 (WLLIQYCLIGIAEVFCIVGLL), 537–557 (SIGSAYAALAGGLGCFAATIL), and 585–605 (CLYWLLTLLSFLNFCVFLWSA).

It belongs to the major facilitator superfamily. Proton-dependent oligopeptide transporter (POT/PTR) (TC 2.A.17) family. Expressed in flower and siliques.

It is found in the membrane. The chain is Protein NRT1/ PTR FAMILY 6.1 (NPF6.1) from Arabidopsis thaliana (Mouse-ear cress).